Here is a 439-residue protein sequence, read N- to C-terminus: Protein disulfide-isomerase A6 (439 aa).

An N-terminal signal peptide occupies residues 1 to 19 (MARLGFGLVSCTFFLAASG). Thioredoxin domains follow at residues 20–133 (LYSS…ALRQ) and 151–287 (QGRG…EDVA). Catalysis depends on nucleophile residues Cys55 and Cys58. A disulfide bond links Cys55 and Cys58. Phosphoserine is present on residues Ser129, Ser156, and Ser158. Residues 141 to 160 (GRSGGYSSGKQGRGDSSSKK) form a disordered region. Residues Cys190 and Cys193 each act as nucleophile in the active site. Cys190 and Cys193 are joined by a disulfide. Residues 400-425 (GSFPAITAREPWDGRDGELPVEDDID) are disordered. A Phosphoserine modification is found at Ser427. The Prevents secretion from ER signature appears at 436 to 439 (KDEL).

It belongs to the protein disulfide isomerase family. As to quaternary structure, part of a large chaperone multiprotein complex comprising DNAJB11, HSP90B1, HSPA5, HYOU, PDIA2, PDIA4, PDIA6, PPIB, SDF2L1, UGGT1 and very small amounts of ERP29, but not, or at very low levels, CALR nor CANX. Interacts with MICA on the surface of tumor cells, leading to MICA disulfide bond reduction which is required for its release from tumor cells. Interacts with ITGB3 following platelet stimulation. Interacts with ERN1; the interaction is direct. Interacts with EIF2AK3. As to expression, expressed most abundantly in lung and kidney, followed by heart, liver and brain.

The protein resides in the endoplasmic reticulum lumen. Its subcellular location is the cell membrane. It is found in the melanosome. The enzyme catalyses Catalyzes the rearrangement of -S-S- bonds in proteins.. Its function is as follows. May function as a chaperone that inhibits aggregation of misfolded proteins. Negatively regulates the unfolded protein response (UPR) through binding to UPR sensors such as ERN1, which in turn inactivates ERN1 signaling. May also regulate the UPR via the EIF2AK3 UPR sensor. Plays a role in platelet aggregation and activation by agonists such as convulxin, collagen and thrombin. This is Protein disulfide-isomerase A6 (PDIA6) from Mesocricetus auratus (Golden hamster).